The chain runs to 246 residues: Probable transcriptional regulatory protein HSM_1763 (246 aa).

The protein belongs to the TACO1 family.

The protein localises to the cytoplasm. This chain is Probable transcriptional regulatory protein HSM_1763, found in Histophilus somni (strain 2336) (Haemophilus somnus).